The following is a 503-amino-acid chain: Probable cytosol aminopeptidase (503 aa).

Positions 270 and 275 each coordinate Mn(2+). The active site involves lysine 282. The Mn(2+) site is built by aspartate 293, aspartate 352, and glutamate 354. The active site involves arginine 356.

This sequence belongs to the peptidase M17 family. Mn(2+) is required as a cofactor.

The protein resides in the cytoplasm. It catalyses the reaction Release of an N-terminal amino acid, Xaa-|-Yaa-, in which Xaa is preferably Leu, but may be other amino acids including Pro although not Arg or Lys, and Yaa may be Pro. Amino acid amides and methyl esters are also readily hydrolyzed, but rates on arylamides are exceedingly low.. The enzyme catalyses Release of an N-terminal amino acid, preferentially leucine, but not glutamic or aspartic acids.. Functionally, presumably involved in the processing and regular turnover of intracellular proteins. Catalyzes the removal of unsubstituted N-terminal amino acids from various peptides. This Shigella flexneri protein is Probable cytosol aminopeptidase.